A 189-amino-acid chain; its full sequence is Rho-related protein racM (189 aa).

Residue 12–19 (GDYGVGKT) participates in GTP binding. An Effector region motif is present at residues 35 to 43 (YVPTALDNF). Residues 60 to 64 (DTAGG) and 118 to 121 (TKID) each bind GTP. The residue at position 186 (cysteine 186) is a Cysteine methyl ester. Cysteine 186 carries the S-geranylgeranyl cysteine lipid modification. Residues 187–189 (IIL) constitute a propeptide, removed in mature form.

Belongs to the small GTPase superfamily. Rho family.

The protein localises to the cell membrane. This Dictyostelium discoideum (Social amoeba) protein is Rho-related protein racM (racM).